The sequence spans 527 residues: Peptide chain release factor 3 (527 aa).

In terms of domain architecture, tr-type G spans 9-277; sequence AKRRTFAIIS…AVVDWAPRPL (269 aa). GTP-binding positions include 18–25, 86–90, and 140–143; these read SHPDAGKT, DTPGH, and NKLD.

It belongs to the TRAFAC class translation factor GTPase superfamily. Classic translation factor GTPase family. PrfC subfamily.

Its subcellular location is the cytoplasm. Its function is as follows. Increases the formation of ribosomal termination complexes and stimulates activities of RF-1 and RF-2. It binds guanine nucleotides and has strong preference for UGA stop codons. It may interact directly with the ribosome. The stimulation of RF-1 and RF-2 is significantly reduced by GTP and GDP, but not by GMP. This chain is Peptide chain release factor 3, found in Pseudomonas putida (strain W619).